Reading from the N-terminus, the 391-residue chain is 3-ketoacyl-CoA thiolase (391 aa).

The Acyl-thioester intermediate role is filled by C95. Active-site proton acceptor residues include H347 and C377.

It belongs to the thiolase-like superfamily. Thiolase family. Heterotetramer of two alpha chains (FadB) and two beta chains (FadA).

It localises to the cytoplasm. The enzyme catalyses an acyl-CoA + acetyl-CoA = a 3-oxoacyl-CoA + CoA. The protein operates within lipid metabolism; fatty acid beta-oxidation. Its function is as follows. Catalyzes the final step of fatty acid oxidation in which acetyl-CoA is released and the CoA ester of a fatty acid two carbons shorter is formed. This is 3-ketoacyl-CoA thiolase from Pseudomonas aeruginosa (strain UCBPP-PA14).